Consider the following 251-residue polypeptide: Short chain dehydrogenase gsfK (251 aa).

NADP(+)-binding residues include L14, T33, E60, N88, and K122. Catalysis depends on proton donor residues S143 and Y161. Y161, K165, V192, and T194 together coordinate NADP(+). The Lowers pKa of active site Tyr role is filled by K165.

The protein belongs to the short-chain dehydrogenases/reductases (SDR) family.

It participates in secondary metabolite biosynthesis; terpenoid biosynthesis. Functionally, short chain dehydrogenase; part of the gene cluster that mediates the biosynthesis of griseofulvin, an important antifungal drug that has been in use for a long time for treating dermatophyte infections. The first step of the pathway is the formation of the heptaketide backbone by gsfA which is initiated by priming with acetyl-CoA, followed by sequential condensations of 6 malonyl-CoA units. The resulting benzophenone can undergo a spontaneous dehydration to form norlichexanthone. However, the true precursor for the griseofulvin biosynthesis is not norlichexanthone, but the heptaketide benzophenone that is O-methylated at 3-OH by gsfB to produce griseophenone D which is further methylated at 9-OH by gsfC to yield griseophenone C. Griseophenone C is then substrate of halogenase gsfI which is responsible for the regio-specific chlorination at the C13 position to form griseophenone B. The cytochrome P450 gsfF catalyzes the coupling of orcinol and phloroglucinol rings in griseophenone B to form desmethyl-dehydrogriseofulvin A which is further methylated at 5-OH by gsfD to yield dehydrogriseofulvin. Finally, gsfE performs stereospecific reduction of enone 18 of dehydrogriseofulvin to afford the final product griseofulvin. The exact role of gsfK within the pathway has not been identified yet. The chain is Short chain dehydrogenase gsfK from Penicillium aethiopicum.